The following is a 397-amino-acid chain: Cathepsin E (397 aa).

The signal sequence occupies residues 1-20 (MKPLLVLLLLLLLDLAQAQG). The propeptide at 21-59 (ALHRVPLRRHQSLRKKLRAQGQLSEFWRSHNLDMTRLSE) is activation peptide. The 315-residue stretch at 79-393 (YFGTISIGTP…DRGNNQVGLA (315 aa)) folds into the Peptidase A1 domain. Asn91 carries an N-linked (GlcNAc...) asparagine glycan. Asp97 is an active-site residue. 2 disulfides stabilise this stretch: Cys110–Cys115 and Cys273–Cys277. Asp282 is an active-site residue. Asn323 carries an N-linked (GlcNAc...) asparagine glycan.

This sequence belongs to the peptidase A1 family. In terms of assembly, homodimer; disulfide-linked. Post-translationally, glycosylated. The nature of the carbohydrate chain varies between cell types. In fibroblasts, the proenzyme contains a high mannose-type oligosaccharide, while the mature enzyme contains a complex-type oligosaccharide. As to expression, expressed abundantly in the stomach, club cells and alveolar macrophages of the lung, brain microglia, spleen and activated B-lymphocytes. Not expressed in resting B-lymphocytes.

The protein localises to the endosome. The enzyme catalyses Similar to cathepsin D, but slightly broader specificity.. Its function is as follows. May have a role in immune function. Probably involved in the processing of antigenic peptides during MHC class II-mediated antigen presentation. May play a role in activation-induced lymphocyte depletion in the thymus, and in neuronal degeneration and glial cell activation in the brain. This is Cathepsin E (Ctse) from Mus musculus (Mouse).